Here is a 352-residue protein sequence, read N- to C-terminus: MLMIARKALASAHTKAFRLATRDVHCFSSILVSPPLVSLDLPENWIPYSDPPPPVSFETEQKTVVIDGNVIAEEIRTKIISEVGKMKKAVGKVPGLAVVLVGEQRDSQTYVRNKIKACEETGIKSVLAELPEDCTEGQIISVLRKFNEDTSIHGILVQLPLPQHLNESKILNMVRLEKDVDGFHPLNVGNLAMRGREPLFVSCTPKGCVELLIRTGVEIAGKNAVVIGRSNIVGLPMSLLLQRHDATVSTVHAFTKDPEHITRKADIVIAAAGIPNLVRGSWLKPGAVVIDVGTTPVEDSSCEFGYRLVGDVCYEEALGVASAITPVPGGVGPMTITMLLCNTLEAAKRIFL.

Residues 1 to 23 (MLMIARKALASAHTKAFRLATRD) constitute a mitochondrion transit peptide.

This sequence belongs to the tetrahydrofolate dehydrogenase/cyclohydrolase family. Homodimer.

The protein resides in the mitochondrion. The enzyme catalyses (6R)-5,10-methylene-5,6,7,8-tetrahydrofolate + NADP(+) = (6R)-5,10-methenyltetrahydrofolate + NADPH. It carries out the reaction (6R)-5,10-methenyltetrahydrofolate + H2O = (6R)-10-formyltetrahydrofolate + H(+). The protein operates within one-carbon metabolism; tetrahydrofolate interconversion. Functionally, catalyzes the oxidation of 5,10-methylenetetrahydrofolate to 5,10-methenyltetrahydrofolate and then the hydrolysis of 5,10-methenyltetrahydrofolate to 10-formyltetrahydrofolate. The polypeptide is Bifunctional protein FolD 1, mitochondrial (FOLD1) (Arabidopsis thaliana (Mouse-ear cress)).